We begin with the raw amino-acid sequence, 241 residues long: Ribonuclease 3 (241 aa).

The RNase III domain occupies 8 to 137 (LTLLKNRLGI…LLGAVYLDQG (130 aa)). Glu50 serves as a coordination point for Mg(2+). Asp54 is a catalytic residue. Residues Asp123 and Glu126 each contribute to the Mg(2+) site. Residue Glu126 is part of the active site. A DRBM domain is found at 164-233 (DYKTELQELV…AKKALMKSDL (70 aa)). The interval 214–241 (RSKKEAEQQAAKKALMKSDLGSACNHKK) is disordered.

This sequence belongs to the ribonuclease III family. As to quaternary structure, homodimer. It depends on Mg(2+) as a cofactor.

It localises to the cytoplasm. It catalyses the reaction Endonucleolytic cleavage to 5'-phosphomonoester.. Its function is as follows. Digests double-stranded RNA. Involved in the processing of primary rRNA transcript to yield the immediate precursors to the large and small rRNAs (23S and 16S). Processes some mRNAs, and tRNAs when they are encoded in the rRNA operon. Processes pre-crRNA and tracrRNA of type II CRISPR loci if present in the organism. In Pelotomaculum thermopropionicum (strain DSM 13744 / JCM 10971 / SI), this protein is Ribonuclease 3.